The following is a 337-amino-acid chain: GTP 3',8-cyclase (337 aa).

The Radical SAM core domain maps to 17 to 242; the sequence is AFQRRYYYLR…QSKGLLDGPA (226 aa). Arg26 is a binding site for GTP. Cys33 and Cys37 together coordinate [4Fe-4S] cluster. Residue Tyr39 participates in S-adenosyl-L-methionine binding. Cys40 contributes to the [4Fe-4S] cluster binding site. Arg76 lines the GTP pocket. Residue Gly80 participates in S-adenosyl-L-methionine binding. Residue Thr107 coordinates GTP. Position 131 (Ser131) interacts with S-adenosyl-L-methionine. GTP is bound at residue Lys168. Met202 contacts S-adenosyl-L-methionine. Positions 265 and 268 each coordinate [4Fe-4S] cluster. Position 270 to 272 (270 to 272) interacts with GTP; it reads RLR. Cys282 is a [4Fe-4S] cluster binding site.

This sequence belongs to the radical SAM superfamily. MoaA family. Monomer and homodimer. The cofactor is [4Fe-4S] cluster.

The catalysed reaction is GTP + AH2 + S-adenosyl-L-methionine = (8S)-3',8-cyclo-7,8-dihydroguanosine 5'-triphosphate + 5'-deoxyadenosine + L-methionine + A + H(+). It functions in the pathway cofactor biosynthesis; molybdopterin biosynthesis. Functionally, catalyzes the cyclization of GTP to (8S)-3',8-cyclo-7,8-dihydroguanosine 5'-triphosphate. In Pasteurella multocida (strain Pm70), this protein is GTP 3',8-cyclase.